The sequence spans 359 residues: Phospho-N-acetylmuramoyl-pentapeptide-transferase (359 aa).

10 helical membrane passes run 7–27 (RSLT…VNSY), 28–48 (IFNS…SLVI), 82–102 (MGGI…NNYV), 103–123 (DSVG…IGFL), 147–167 (ALIA…NPLI), 179–199 (IVIF…VNLT), 203–223 (DGLA…EIFI), 229–249 (LIIY…FLKY), 256–276 (IFMG…ISIL), and 337–357 (IVEN…VLKI).

This sequence belongs to the glycosyltransferase 4 family. MraY subfamily. The cofactor is Mg(2+).

Its subcellular location is the cell inner membrane. The catalysed reaction is UDP-N-acetyl-alpha-D-muramoyl-L-alanyl-gamma-D-glutamyl-meso-2,6-diaminopimeloyl-D-alanyl-D-alanine + di-trans,octa-cis-undecaprenyl phosphate = di-trans,octa-cis-undecaprenyl diphospho-N-acetyl-alpha-D-muramoyl-L-alanyl-D-glutamyl-meso-2,6-diaminopimeloyl-D-alanyl-D-alanine + UMP. The protein operates within cell wall biogenesis; peptidoglycan biosynthesis. Functionally, catalyzes the initial step of the lipid cycle reactions in the biosynthesis of the cell wall peptidoglycan: transfers peptidoglycan precursor phospho-MurNAc-pentapeptide from UDP-MurNAc-pentapeptide onto the lipid carrier undecaprenyl phosphate, yielding undecaprenyl-pyrophosphoryl-MurNAc-pentapeptide, known as lipid I. This is Phospho-N-acetylmuramoyl-pentapeptide-transferase from Prochlorococcus marinus subsp. pastoris (strain CCMP1986 / NIES-2087 / MED4).